We begin with the raw amino-acid sequence, 181 residues long: Inner membrane-spanning protein YciB (181 aa).

The next 5 helical transmembrane spans lie at 8 to 28 (FPIICFFVAYKFWGIYIATAA), 53 to 73 (ITLIFILLLGSFTLVFHNAIF), 76 to 96 (WKPTIVYWIFAIVLFGSHFFG), 121 to 141 (LSWALFFLILGVLNLFVVYNF), and 149 to 169 (FKLFGTLVLTLVFILGQAFYI).

Belongs to the YciB family.

It localises to the cell inner membrane. Plays a role in cell envelope biogenesis, maintenance of cell envelope integrity and membrane homeostasis. The polypeptide is Inner membrane-spanning protein YciB (Coxiella burnetii (strain RSA 331 / Henzerling II)).